A 122-amino-acid polypeptide reads, in one-letter code: Small ribosomal subunit protein uS13c (122 aa).

It belongs to the universal ribosomal protein uS13 family. Part of the 30S ribosomal subunit.

It localises to the plastid. The protein resides in the chloroplast. In terms of biological role, located at the top of the head of the 30S subunit, it contacts several helices of the 16S rRNA. This is Small ribosomal subunit protein uS13c from Cyanidium caldarium (Red alga).